We begin with the raw amino-acid sequence, 367 residues long: DNA replication and repair protein RecF (367 aa).

ATP is bound at residue 30-37 (GANGSGKT).

Belongs to the RecF family.

The protein resides in the cytoplasm. Functionally, the RecF protein is involved in DNA metabolism; it is required for DNA replication and normal SOS inducibility. RecF binds preferentially to single-stranded, linear DNA. It also seems to bind ATP. The sequence is that of DNA replication and repair protein RecF from Pseudomonas fluorescens (strain SBW25).